A 189-amino-acid polypeptide reads, in one-letter code: Orotate phosphoribosyltransferase (189 aa).

Residues R99, K100, K103, H105, and 126 to 134 (EDVITTGGS) each bind 5-phospho-alpha-D-ribose 1-diphosphate. 2 residues coordinate orotate: T130 and R158.

It belongs to the purine/pyrimidine phosphoribosyltransferase family. PyrE subfamily. Homodimer. The cofactor is Mg(2+).

It catalyses the reaction orotidine 5'-phosphate + diphosphate = orotate + 5-phospho-alpha-D-ribose 1-diphosphate. It functions in the pathway pyrimidine metabolism; UMP biosynthesis via de novo pathway; UMP from orotate: step 1/2. In terms of biological role, catalyzes the transfer of a ribosyl phosphate group from 5-phosphoribose 1-diphosphate to orotate, leading to the formation of orotidine monophosphate (OMP). This chain is Orotate phosphoribosyltransferase, found in Thermosynechococcus vestitus (strain NIES-2133 / IAM M-273 / BP-1).